The chain runs to 292 residues: Shikimate dehydrogenase (NADP(+)) (292 aa).

Residues 22–24 (SLS) and Ser-69 contribute to the shikimate site. Lys-73 (proton acceptor) is an active-site residue. The shikimate site is built by Asn-94 and Asp-111. Residues 135–139 (GVGGA) and Ile-236 each bind NADP(+). Tyr-238 serves as a coordination point for shikimate. Residue Gly-260 coordinates NADP(+).

The protein belongs to the shikimate dehydrogenase family. As to quaternary structure, homodimer.

It catalyses the reaction shikimate + NADP(+) = 3-dehydroshikimate + NADPH + H(+). Its pathway is metabolic intermediate biosynthesis; chorismate biosynthesis; chorismate from D-erythrose 4-phosphate and phosphoenolpyruvate: step 4/7. Functionally, involved in the biosynthesis of the chorismate, which leads to the biosynthesis of aromatic amino acids. Catalyzes the reversible NADPH linked reduction of 3-dehydroshikimate (DHSA) to yield shikimate (SA). This chain is Shikimate dehydrogenase (NADP(+)), found in Streptococcus pyogenes serotype M18 (strain MGAS8232).